A 308-amino-acid chain; its full sequence is Methionyl-tRNA formyltransferase (308 aa).

109-112 (SLLP) serves as a coordination point for (6S)-5,6,7,8-tetrahydrofolate.

This sequence belongs to the Fmt family.

The catalysed reaction is L-methionyl-tRNA(fMet) + (6R)-10-formyltetrahydrofolate = N-formyl-L-methionyl-tRNA(fMet) + (6S)-5,6,7,8-tetrahydrofolate + H(+). Its function is as follows. Attaches a formyl group to the free amino group of methionyl-tRNA(fMet). The formyl group appears to play a dual role in the initiator identity of N-formylmethionyl-tRNA by promoting its recognition by IF2 and preventing the misappropriation of this tRNA by the elongation apparatus. In Clostridium beijerinckii (strain ATCC 51743 / NCIMB 8052) (Clostridium acetobutylicum), this protein is Methionyl-tRNA formyltransferase.